Reading from the N-terminus, the 810-residue chain is Plasminogen (810 aa).

An N-terminal signal peptide occupies residues 1–19 (MEHKEVVLLLLLFLKSGQG). In terms of domain architecture, PAN spans 20-98 (EPLDDYVNTK…RDVVLFEKKV (79 aa)). 12 disulfides stabilise this stretch: cysteine 49-cysteine 73, cysteine 53-cysteine 61, cysteine 103-cysteine 181, cysteine 124-cysteine 164, cysteine 152-cysteine 176, cysteine 185-cysteine 262, cysteine 188-cysteine 316, cysteine 206-cysteine 245, cysteine 234-cysteine 257, cysteine 275-cysteine 352, cysteine 296-cysteine 335, and cysteine 324-cysteine 347. Kringle domains follow at residues 103 to 181 (CKTG…IPEC), 184 to 262 (ECMH…IPRC), and 275 to 352 (CLKG…IPSC). Positions 125-141 (QKWSSTSPHRPTFSPAT) are enriched in polar residues. Residues 125-145 (QKWSSTSPHRPTFSPATHPSE) form a disordered region. Positions 136, 158, and 172 each coordinate L-lysine. Threonine 365 carries O-linked (GalNAc...) threonine glycosylation. 9 disulfides stabilise this stretch: cysteine 377–cysteine 454, cysteine 398–cysteine 437, cysteine 426–cysteine 449, cysteine 481–cysteine 560, cysteine 502–cysteine 543, cysteine 531–cysteine 555, cysteine 567–cysteine 685, cysteine 577–cysteine 585, and cysteine 607–cysteine 623. Kringle domains follow at residues 377–454 (CYHG…LKKC) and 481–560 (CMFG…VPQC). Residues aspartate 432 and arginine 445 each contribute to the L-lysine site. Positions 581 to 808 (VVGGCVAYPH…FVTWIEGVMR (228 aa)) constitute a Peptidase S1 domain. Serine 597 is modified (phosphoserine). Residues histidine 622 and aspartate 665 each act as charge relay system in the active site. Serine 688 carries the post-translational modification Phosphoserine. 3 disulfides stabilise this stretch: cysteine 699–cysteine 766, cysteine 729–cysteine 745, and cysteine 756–cysteine 784. The active-site Charge relay system is serine 760.

It belongs to the peptidase S1 family. Plasminogen subfamily. Interacts with CSPG4 and AMOT. Interacts (via the Kringle domains) with HRG; the interaction tethers PLG to the cell surface and enhances its activation. Interacts (via Kringle 4 domain) with ADA; the interaction stimulates PLG activation when in complex with DPP4. Angiostatin: Interacts with ATP5F1A; the interaction inhibits most of the angiogenic effects of angiostatin. In terms of processing, in the presence of the inhibitor, the activation involves only cleavage after Arg-580, yielding two chains held together by two disulfide bonds. In the absence of the inhibitor, the activation involves additionally the removal of the activation peptide.

Its subcellular location is the secreted. It catalyses the reaction Preferential cleavage: Lys-|-Xaa &gt; Arg-|-Xaa, higher selectivity than trypsin. Converts fibrin into soluble products.. With respect to regulation, converted into plasmin by plasminogen activators, both plasminogen and its activator being bound to fibrin. Activated with catalytic amounts of streptokinase. Its function is as follows. Plasmin dissolves the fibrin of blood clots and acts as a proteolytic factor in a variety of other processes including embryonic development, tissue remodeling, tumor invasion, and inflammation. In ovulation, weakens the walls of the Graafian follicle. It activates the urokinase-type plasminogen activator, collagenases and several complement zymogens, such as C1, C4 and C5. Cleavage of fibronectin and laminin leads to cell detachment and apoptosis. Also cleaves fibrin, thrombospondin and von Willebrand factor. Its role in tissue remodeling and tumor invasion may be modulated by CSPG4. Binds to cells. This chain is Plasminogen (PLG), found in Macaca mulatta (Rhesus macaque).